Reading from the N-terminus, the 124-residue chain is Holo-[acyl-carrier-protein] synthase (124 aa).

Positions 8 and 56 each coordinate Mg(2+).

It belongs to the P-Pant transferase superfamily. AcpS family. Requires Mg(2+) as cofactor.

The protein localises to the cytoplasm. It carries out the reaction apo-[ACP] + CoA = holo-[ACP] + adenosine 3',5'-bisphosphate + H(+). Transfers the 4'-phosphopantetheine moiety from coenzyme A to a Ser of acyl-carrier-protein. In Maridesulfovibrio salexigens (strain ATCC 14822 / DSM 2638 / NCIMB 8403 / VKM B-1763) (Desulfovibrio salexigens), this protein is Holo-[acyl-carrier-protein] synthase.